A 236-amino-acid polypeptide reads, in one-letter code: MEKREELYRGKAKSVYRTDDADRLILLFRNDTSAFDGKRIEQLDRKGAVNNKFNAFIMQKLEAAGIPTQFDTLLSDTECLVKKLDMIPVECVVRNFAAGSLVRRLGVEEGIALTPPTFELFLKNDALGDPFINESHVQAFGWATPEQLAQMKTYSFKVNEVLNKLFEEAGLLLVDFKLEFGLFHGQIVLGDEFSPDGCRLWDKETRKKMDKDRFRQGLGEVIEAYEEVARRLGVPL.

Belongs to the SAICAR synthetase family.

It catalyses the reaction 5-amino-1-(5-phospho-D-ribosyl)imidazole-4-carboxylate + L-aspartate + ATP = (2S)-2-[5-amino-1-(5-phospho-beta-D-ribosyl)imidazole-4-carboxamido]succinate + ADP + phosphate + 2 H(+). It participates in purine metabolism; IMP biosynthesis via de novo pathway; 5-amino-1-(5-phospho-D-ribosyl)imidazole-4-carboxamide from 5-amino-1-(5-phospho-D-ribosyl)imidazole-4-carboxylate: step 1/2. The polypeptide is Phosphoribosylaminoimidazole-succinocarboxamide synthase (Pseudomonas paraeruginosa (strain DSM 24068 / PA7) (Pseudomonas aeruginosa (strain PA7))).